Here is a 103-residue protein sequence, read N- to C-terminus: Protein translation factor SUI1 homolog (103 aa).

Belongs to the SUI1 family.

The sequence is that of Protein translation factor SUI1 homolog from Hyperthermus butylicus (strain DSM 5456 / JCM 9403 / PLM1-5).